The following is an 88-amino-acid chain: Small ribosomal subunit protein bS20 (88 aa).

A disordered region spans residues 1–27 (MANSKSAKKRALQSEKRRQHNASRRSM).

The protein belongs to the bacterial ribosomal protein bS20 family.

In terms of biological role, binds directly to 16S ribosomal RNA. In Shewanella putrefaciens (strain CN-32 / ATCC BAA-453), this protein is Small ribosomal subunit protein bS20.